Here is a 116-residue protein sequence, read N- to C-terminus: MAGRSGDSDEELLKTVRLIKFLYQSNPPPNPEGTRQARRNRRRRWRERQRQIRKISGWILSTYLGRSAEPVPLQLPPLERLNLDCSEDCGTSGTQGVGSPEILVESPAVLEPGTKE.

Phosphoserine; by host CK2 occurs at positions 5 and 8. Positions 18 to 26 are homomultimerization; sequence LIKFLYQSN. The segment at 23 to 48 is disordered; sequence YQSNPPPNPEGTRQARRNRRRRWRER. The short motif at 34-50 is the Nuclear localization signal and RNA-binding (RRE) element; sequence TRQARRNRRRRWRERQR. A compositionally biased stretch (basic residues) spans 36 to 48; sequence QARRNRRRRWRER. Residues 73-84 carry the Nuclear export signal and binding to XPO1 motif; sequence LQLPPLERLNLD. Residues 90–116 are disordered; that stretch reads GTSGTQGVGSPEILVESPAVLEPGTKE. Phosphoserine; by host occurs at positions 92 and 99.

Belongs to the HIV-1 REV protein family. As to quaternary structure, homomultimer; when bound to the RRE. Multimeric assembly is essential for activity and may involve XPO1. Binds to human KPNB1, XPO1, TNPO1, RANBP5 and IPO7. Interacts with the viral Integrase. Interacts with human KHDRBS1. Interacts with human NAP1; this interaction decreases Rev multimerization and stimulates its activity. Interacts with human DEAD-box helicases DDX3 and DDX24; these interactions may serve for viral RNA export to the cytoplasm and packaging, respectively. Interacts with human PSIP1; this interaction may inhibit HIV-1 DNA integration by promoting dissociation of the Integrase-LEDGF/p75 complex. Post-translationally, asymmetrically arginine dimethylated at one site by host PRMT6. Methylation impairs the RNA-binding activity and export of viral RNA from the nucleus to the cytoplasm. In terms of processing, phosphorylated by protein kinase CK2. Presence of, and maybe binding to the N-terminus of the regulatory beta subunit of CK2 is necessary for CK2-mediated Rev's phosphorylation.

The protein resides in the host nucleus. It is found in the host nucleolus. Its subcellular location is the host cytoplasm. Functionally, escorts unspliced or incompletely spliced viral pre-mRNAs (late transcripts) out of the nucleus of infected cells. These pre-mRNAs carry a recognition sequence called Rev responsive element (RRE) located in the env gene, that is not present in fully spliced viral mRNAs (early transcripts). This function is essential since most viral proteins are translated from unspliced or partially spliced pre-mRNAs which cannot exit the nucleus by the pathway used by fully processed cellular mRNAs. Rev itself is translated from a fully spliced mRNA that readily exits the nucleus. Rev's nuclear localization signal (NLS) binds directly to KPNB1/Importin beta-1 without previous binding to KPNA1/Importin alpha-1. KPNB1 binds to the GDP bound form of RAN (Ran-GDP) and targets Rev to the nucleus. In the nucleus, the conversion from Ran-GDP to Ran-GTP dissociates Rev from KPNB1 and allows Rev's binding to the RRE in viral pre-mRNAs. Rev multimerization on the RRE via cooperative assembly exposes its nuclear export signal (NES) to the surface. Rev can then form a complex with XPO1/CRM1 and Ran-GTP, leading to nuclear export of the complex. Conversion from Ran-GTP to Ran-GDP mediates dissociation of the Rev/RRE/XPO1/RAN complex, so that Rev can return to the nucleus for a subsequent round of export. Beside KPNB1, also seems to interact with TNPO1/Transportin-1, RANBP5/IPO5 and IPO7/RANBP7 for nuclear import. The nucleoporin-like HRB/RIP is an essential cofactor that probably indirectly interacts with Rev to release HIV RNAs from the perinuclear region to the cytoplasm. This Human immunodeficiency virus type 1 group M subtype B (isolate OYI) (HIV-1) protein is Protein Rev.